A 258-amino-acid polypeptide reads, in one-letter code: Cobalt-precorrin-4 C(11)-methyltransferase (258 aa).

The protein belongs to the precorrin methyltransferase family. As to quaternary structure, homodimer.

It catalyses the reaction Co-precorrin-4 + S-adenosyl-L-methionine = Co-precorrin-5A + S-adenosyl-L-homocysteine + H(+). It participates in cofactor biosynthesis; adenosylcobalamin biosynthesis; cob(II)yrinate a,c-diamide from sirohydrochlorin (anaerobic route): step 4/10. Its function is as follows. Catalyzes the methylation of C-11 in cobalt-precorrin-4 to form cobalt-precorrin-5A. In Priestia megaterium (Bacillus megaterium), this protein is Cobalt-precorrin-4 C(11)-methyltransferase (cbiF).